Here is a 650-residue protein sequence, read N- to C-terminus: Acetyl-coenzyme A synthetase (650 aa).

CoA is bound by residues 191-194 (RGGR), threonine 311, and asparagine 335. ATP-binding positions include 387 to 389 (GEP), 411 to 416 (DTWWQT), aspartate 500, and arginine 515. Serine 523 is a binding site for CoA. Arginine 526 is a binding site for ATP. Mg(2+)-binding residues include valine 537, histidine 539, and valine 542. Arginine 584 is a binding site for CoA. Position 609 is an N6-acetyllysine (lysine 609).

Belongs to the ATP-dependent AMP-binding enzyme family. Mg(2+) is required as a cofactor. Acetylated. Deacetylation by the SIR2-homolog deacetylase activates the enzyme.

The catalysed reaction is acetate + ATP + CoA = acetyl-CoA + AMP + diphosphate. Catalyzes the conversion of acetate into acetyl-CoA (AcCoA), an essential intermediate at the junction of anabolic and catabolic pathways. AcsA undergoes a two-step reaction. In the first half reaction, AcsA combines acetate with ATP to form acetyl-adenylate (AcAMP) intermediate. In the second half reaction, it can then transfer the acetyl group from AcAMP to the sulfhydryl group of CoA, forming the product AcCoA. This is Acetyl-coenzyme A synthetase from Shewanella amazonensis (strain ATCC BAA-1098 / SB2B).